The sequence spans 739 residues: Nucleoprotein (739 aa).

A coiled-coil region spans residues 334–363; the sequence is VNVGEQYQQLREAATEAEKQLQQYAESREL. The segment at 415–646 is disordered; sequence PKTSGHYDDD…QDSDNTQPEH (232 aa). Composition is skewed to low complexity over residues 449-458 and 504-514; these read SQDTTIPDVV and KGGQQKNSQKG. Residues 520 to 530 show a composition bias toward polar residues; it reads RQTQSRPTQNI. Residues 567 to 579 are compositionally biased toward acidic residues; that stretch reads EEADPLDDADDET. Residues 611–638 are compositionally biased toward basic and acidic residues; that stretch reads YRDHSEKKELPQDERQDQDHTQEARNQD.

It belongs to the filoviruses nucleoprotein family. In terms of assembly, homooligomer. Homomultimerizes to form the nucleocapsid. Binds to viral genomic RNA. Interacts with VP35 and VP30 to form the nucleocapsid. Interacts with host PPP2R5C; this interaction leads to VP30 dephosphorylation and viral transcription. Interacts with VP24; this interaction facilitates nucleocapsid assembly and genome packaging. Interacts with matrix protein VP40; this interaction allows recruitment of the nucleocapsid into progeny virions. Interacts with host STAU1. Interacts with host NXF1 (via RNA-binding domain); this interaction recruits NXF1 to the inclusion bodies were viral replication takes place, probably to export viral mRNA-NXF1 complexes from these sites. Interacts with host CCDC92; this interaction sequesters NP in the host cytoplasm. Interacts with host TRIM14. In terms of processing, phosphorylated and O-glycosylated by host. Acetylated by host EP300 in vitro.

It is found in the virion. It localises to the host cytoplasm. Its function is as follows. Oligomerizes into helical capsid to encapsidate the viral genome, protecting it from nucleases and the cellular innate immune response. VP35 binds to and stabilizes monomeric NP, keeping it soluble. Upon virus replication, NP is recruited to bind cooperatively viral genomic RNA and VP35 is released. The encapsidated genomic RNA is termed the nucleocapsid and serves as template for transcription and replication. The nucleocapsid is helical with a pitch of 10.81 NP per turn and a diameter of about 22nm. Each NP binds to six nucleotides of viral genomic RNA, three being exposed to the solvant and three hidden into the nucleocapsid. Also recruits host PPP2R5C phosphatase to dephosphorylate VP30 and thereby promote viral transcription. Upon virion assembly and budding, NP binds to VP24 and possibly host STAU1. This is Nucleoprotein (NP) from Zaire ebolavirus (strain Gabon-94) (ZEBOV).